Here is a 549-residue protein sequence, read N- to C-terminus: Serine/threonine-protein phosphatase PPQ (549 aa).

Over residues 1 to 13 (MRRSPSRSNNNFA) the composition is skewed to polar residues. Disordered stretches follow at residues 1–50 (MRRS…RSLP), 64–85 (YNTLASAGKNNNNKRASNDNLL), 133–158 (TSSTTTATTSNNILTSPSYRESNYSS), and 189–219 (SRVKSPSSSVKAGSFGAPSSPTSGIPNPKSS). Composition is skewed to low complexity over residues 16-32 (NCSTNSNSSQQQLTTPS) and 68-83 (ASAGKNNNNKRASNDN). Polar residues predominate over residues 205 to 217 (APSSPTSGIPNPK). Mn(2+) contacts are provided by Asp301, His303, Asp329, and Asn361. Residue His362 is the Proton donor of the active site. Mn(2+) is bound by residues His410 and His485.

The protein belongs to the PPP phosphatase family. PP-Z subfamily. Requires Mn(2+) as cofactor.

It catalyses the reaction O-phospho-L-seryl-[protein] + H2O = L-seryl-[protein] + phosphate. It carries out the reaction O-phospho-L-threonyl-[protein] + H2O = L-threonyl-[protein] + phosphate. Phosphatase involved in the regulation of protein synthesis. Affects translational accuracy. The polypeptide is Serine/threonine-protein phosphatase PPQ (PPQ1) (Saccharomyces cerevisiae (strain ATCC 204508 / S288c) (Baker's yeast)).